The primary structure comprises 584 residues: Adenine deaminase (584 aa).

The protein belongs to the metallo-dependent hydrolases superfamily. Adenine deaminase family. It depends on Mn(2+) as a cofactor.

The enzyme catalyses adenine + H2O + H(+) = hypoxanthine + NH4(+). This Methanococcoides burtonii (strain DSM 6242 / NBRC 107633 / OCM 468 / ACE-M) protein is Adenine deaminase.